The sequence spans 435 residues: Solute carrier family 38 member 8 (435 aa).

Helical transmembrane passes span 29–49 (AVFI…PWAF), 55–75 (VVPA…GLVI), 100–120 (IGKL…VAFL), 151–171 (FTLP…REIA), 178–198 (ILGT…YYLW), 218–240 (VFSV…SIYC), 250–270 (WALV…LTGV), 295–315 (IIVA…IVLF), 348–368 (MPLT…MPDL), 374–394 (IIGG…LICA), and 410–430 (VWGV…TAAA).

It belongs to the amino acid/polyamine transporter 2 family. As to expression, expressed in fetal and adult brain, and spinal cord. In the brain, it is localized in the cell body and axon of the majority of neuronal cells and in a subset of glial cells. Found throughout the neuronal retina, with higher expression levels in the inner and outer plexiform layers and the photoreceptor layer. Very weak expression is also present in the kidneys, thymus, and testes.

The protein resides in the membrane. It is found in the cytoplasm. Its subcellular location is the cell cortex. It localises to the cell projection. The protein localises to the axon. It carries out the reaction L-glutamine(out) = L-glutamine(in). The catalysed reaction is L-alanine(in) = L-alanine(out). The enzyme catalyses L-histidine(out) = L-histidine(in). It catalyses the reaction L-aspartate(out) = L-aspartate(in). It carries out the reaction L-arginine(in) = L-arginine(out). The catalysed reaction is L-leucine(in) = L-leucine(out). Functionally, electrogenic sodium-dependent amino acid transporter with a preference for L-glutamine, L-alanine, L-histidine, L-aspartate and L-arginine. May facilitate glutamine uptake in both excitatory and inhibitory neurons. The transport mechanism and stoichiometry remain to be elucidated. This Homo sapiens (Human) protein is Solute carrier family 38 member 8.